The chain runs to 122 residues: Methylglyoxal synthase (122 aa).

The MGS-like domain maps to Met1–Lys122. Residues His8, Lys12, Thr34–Thr37, and Ser54–Gly55 each bind substrate. Asp60 (proton donor/acceptor) is an active-site residue. Residue His87 participates in substrate binding.

This sequence belongs to the methylglyoxal synthase family.

The catalysed reaction is dihydroxyacetone phosphate = methylglyoxal + phosphate. Functionally, catalyzes the formation of methylglyoxal from dihydroxyacetone phosphate. The protein is Methylglyoxal synthase of Acholeplasma laidlawii (strain PG-8A).